The chain runs to 798 residues: Transferrin receptor protein 2 (798 aa).

Residues 1-81 (MEQRWGLLRK…WAAAGRKAAP (81 aa)) are Cytoplasmic-facing. Positions 23-26 (YRRV) match the Endocytosis signal motif. Residues 25–44 (RVEGPQLENLEEEDREEGEE) are disordered. Over residues 33–44 (NLEEEDREEGEE) the composition is skewed to acidic residues. A helical; Signal-anchor for type II membrane protein membrane pass occupies residues 82–102 (YLVLTTLLIFTGAFLLGYVAF). The Extracellular segment spans residues 103-798 (RGSCQACGDS…GDVWNIDNNF (696 aa)). N-linked (GlcNAc...) asparagine glycosylation is found at Asn235, Asn334, and Asn535.

The protein belongs to the peptidase M28 family. M28B subfamily. As to quaternary structure, homodimer.

It is found in the cell membrane. Its function is as follows. Mediates cellular uptake of transferrin-bound iron in a non-iron dependent manner. May be involved in iron metabolism, hepatocyte function and erythrocyte differentiation. This chain is Transferrin receptor protein 2 (Tfr2), found in Rattus norvegicus (Rat).